We begin with the raw amino-acid sequence, 505 residues long: MIKIQPEEISSVIRKQIEQYNQEVKVVNTGTVLQVGDGIARIYGLAKAMAGELLEFEDGTVGIALNLESNNVGAVLMGDGFSIQEGSRVKATGKIAQIPIGESYIGRVVDALARPIDGKGDIPSSETRLIESPAPGIISRRSVYEPLQTGLVSVDAMIPIGRGQRELIIGDRQTGKTAVAIDTILNQKGQNVICVYVAIGQKASSVAQVVSTLEENGAMAYTIIVAENANAPATLQYLAPYTGATLAEFFMYSGRHTLVIYDDLSKQAQAYREMSLLLRRPPGREAYPGDVFYLHSRLLERAAKLSNALGEGSMTALPIIETQAGDVAAYIPTNVISITDGQIFLSADLFNSGIRPAINVGISVSRVGSAAQIKAMKQVAGKLKLELAQFAELEAFAQFASDLDKATQNQLARGRRLRELLKQAQSSPLPVAQQVLTIYAGVNGYLDSIAIEDVKKFLAGLRNYVITSKAAIINNINSSKAVTPETEGMMKEAINEYKKVFAAGA.

170–177 (GDRQTGKT) serves as a coordination point for ATP.

It belongs to the ATPase alpha/beta chains family. F-type ATPases have 2 components, CF(1) - the catalytic core - and CF(0) - the membrane proton channel. CF(1) has five subunits: alpha(3), beta(3), gamma(1), delta(1), epsilon(1). CF(0) has four main subunits: a, b, b' and c.

The protein resides in the plastid. It is found in the chloroplast thylakoid membrane. It catalyses the reaction ATP + H2O + 4 H(+)(in) = ADP + phosphate + 5 H(+)(out). Functionally, produces ATP from ADP in the presence of a proton gradient across the membrane. The alpha chain is a regulatory subunit. The protein is ATP synthase subunit alpha, chloroplastic of Mesostigma viride (Green alga).